A 351-amino-acid chain; its full sequence is Porphobilinogen deaminase (351 aa).

Residue C242 is modified to S-(dipyrrolylmethanemethyl)cysteine.

This sequence belongs to the HMBS family. Monomer. It depends on dipyrromethane as a cofactor.

The catalysed reaction is 4 porphobilinogen + H2O = hydroxymethylbilane + 4 NH4(+). It functions in the pathway porphyrin-containing compound metabolism; protoporphyrin-IX biosynthesis; coproporphyrinogen-III from 5-aminolevulinate: step 2/4. In terms of biological role, tetrapolymerization of the monopyrrole PBG into the hydroxymethylbilane pre-uroporphyrinogen in several discrete steps. This Rickettsia rickettsii (strain Sheila Smith) protein is Porphobilinogen deaminase.